A 56-amino-acid chain; its full sequence is uncharacterized protein (56 aa).

The segment at Ser15–Lys56 is disordered.

This is an uncharacterized protein from Dictyostelium discoideum (Social amoeba).